The chain runs to 207 residues: Thymidylate kinase (207 aa).

An ATP-binding site is contributed by 9-16; that stretch reads GGEGCGKS.

The protein belongs to the thymidylate kinase family.

The enzyme catalyses dTMP + ATP = dTDP + ADP. In terms of biological role, phosphorylation of dTMP to form dTDP in both de novo and salvage pathways of dTTP synthesis. This Dehalococcoides mccartyi (strain ATCC BAA-2266 / KCTC 15142 / 195) (Dehalococcoides ethenogenes (strain 195)) protein is Thymidylate kinase.